Here is a 574-residue protein sequence, read N- to C-terminus: MAHRILTLILLFCSAHASASLFGQQNASQFVPADQAFAFDFQQQQHQLTLNWQIKPGYYLYRQQIRVTPANASVAPPALPTGEPHEDEFFGKSEIYRDALSVPVTVEQAAPGATLSVTYQGCAEAGFCYPPETRTVPLSAVEPTESVKANAATPSAATGEQTRVNSDSPSATLPFSAFWALLIGIGVAFTPCVLPMYPLISGIVLGGDKRLSTRRALLLAFIYVQGMALTYTALGLVVAAAGLQFQAALQSPWVLVTLSAVFVLLALSMFGLFTLQLPASLQTRLTLMSNRQRGGSPGGVFAMGAIAGLICSPCTTAPLSAILLYIAQSGNLWLGGGTLYLYALGMGLPLILVTVFGNRLLPKSGPWMEQVKTAFGFVILALPVFLLERVLGEPWGVRLWSVLGVAFFGWAFVTSLNATRSWMRAVQIVLLGAAMICARPLQDWVFGAPVAESQAHLAFTRIATVDDLDRALAQAKGKPVMLDLYADWCVACKEFEKYTFSAPEVQRALDGAVLLQADVTANSAADVALLKRLNVLGLPTIIFFDAQGNEIPNGRVTGFMDAPAFATHLHNRLR.

The first 19 residues, 1 to 19 (MAHRILTLILLFCSAHASA), serve as a signal peptide directing secretion. Cysteine 122 and cysteine 128 form a disulfide bridge. The interval 147-169 (VKANAATPSAATGEQTRVNSDSP) is disordered. The span at 152–169 (ATPSAATGEQTRVNSDSP) shows a compositional bias: polar residues. 7 helical membrane-spanning segments follow: residues 173 to 193 (LPFSAFWALLIGIGVAFTPCV), 218 to 238 (LLAFIYVQGMALTYTALGLVV), 253 to 273 (WVLVTLSAVFVLLALSMFGLF), 306 to 326 (IAGLICSPCTTAPLSAILLYI), 333 to 353 (WLGGGTLYLYALGMGLPLILV), 367 to 387 (WMEQVKTAFGFVILALPVFLL), and 399 to 419 (LWSVLGVAFFGWAFVTSLNAT). An intrachain disulfide couples cysteine 192 to cysteine 314. The Thioredoxin domain maps to 430-574 (LLGAAMICAR…FATHLHNRLR (145 aa)). The cysteines at positions 489 and 492 are disulfide-linked.

This sequence belongs to the thioredoxin family. DsbD subfamily.

Its subcellular location is the cell inner membrane. It carries out the reaction [protein]-dithiol + NAD(+) = [protein]-disulfide + NADH + H(+). The enzyme catalyses [protein]-dithiol + NADP(+) = [protein]-disulfide + NADPH + H(+). In terms of biological role, required to facilitate the formation of correct disulfide bonds in some periplasmic proteins and for the assembly of the periplasmic c-type cytochromes. Acts by transferring electrons from cytoplasmic thioredoxin to the periplasm. This transfer involves a cascade of disulfide bond formation and reduction steps. The chain is Thiol:disulfide interchange protein DsbD from Cronobacter sakazakii (strain ATCC BAA-894) (Enterobacter sakazakii).